Here is a 155-residue protein sequence, read N- to C-terminus: Endoribonuclease YbeY (155 aa).

3 residues coordinate Zn(2+): His-114, His-118, and His-124.

The protein belongs to the endoribonuclease YbeY family. Zn(2+) is required as a cofactor.

It is found in the cytoplasm. Single strand-specific metallo-endoribonuclease involved in late-stage 70S ribosome quality control and in maturation of the 3' terminus of the 16S rRNA. This chain is Endoribonuclease YbeY, found in Escherichia coli O7:K1 (strain IAI39 / ExPEC).